The primary structure comprises 208 residues: Thymidylate kinase (208 aa).

ATP is bound at residue 12-19 (GVDGAGKS).

Belongs to the thymidylate kinase family.

The catalysed reaction is dTMP + ATP = dTDP + ADP. In terms of biological role, phosphorylation of dTMP to form dTDP in both de novo and salvage pathways of dTTP synthesis. This is Thymidylate kinase from Bordetella bronchiseptica (strain ATCC BAA-588 / NCTC 13252 / RB50) (Alcaligenes bronchisepticus).